The sequence spans 529 residues: MQQRRPVRRALLSVSDKAGIVEFAQALSARGVELLSTGGTARLLAEKGLPVTEVSDYTGFPEMMDGRVKTLHPKVHGGILGRRGQDDTIMEEHQIQPIDMVVVNLYPFAQTVAREGCSLEDAVENIDIGGPTMVRSAAKNHKDVAIVVKSSDYDAIIKEIDANEGSLTLETRFDLAIKAFEHTAAYDSMIANYFGSMVPAYHGESKEAAGRFPRTLNLNFIKKQDMRYGENSHQQAAFYIEENVKEASVATATQVQGKALSYNNIADTDAALECVKEFAEPACVIVKHANPCGVAIGNSILDAYDRAYKTDPTSAFGGIIAFNRELDAETAQAIISRQFVEVIIAPSASEEALKITAAKQNVRVLTCGQWGERVPGLDFKRVNGGLLVQDRDLGMVGAEELRVVTKRQPTEQELRDALFCWKVAKFVKSNAIVYAKNNMTIGIGAGQMSRVYSAKIAGIKAADEGLEVKGSSMASDAFFPFRDGIDAAAAAGVTCVIQPGGSIRDDEVIAAADEHGIAMLFTDMRHFRH.

Residues 1–148 (MQQRRPVRRA…KNHKDVAIVV (148 aa)) form the MGS-like domain. N6-acetyllysine is present on Lys-287.

The protein belongs to the PurH family.

It catalyses the reaction (6R)-10-formyltetrahydrofolate + 5-amino-1-(5-phospho-beta-D-ribosyl)imidazole-4-carboxamide = 5-formamido-1-(5-phospho-D-ribosyl)imidazole-4-carboxamide + (6S)-5,6,7,8-tetrahydrofolate. It carries out the reaction IMP + H2O = 5-formamido-1-(5-phospho-D-ribosyl)imidazole-4-carboxamide. It functions in the pathway purine metabolism; IMP biosynthesis via de novo pathway; 5-formamido-1-(5-phospho-D-ribosyl)imidazole-4-carboxamide from 5-amino-1-(5-phospho-D-ribosyl)imidazole-4-carboxamide (10-formyl THF route): step 1/1. The protein operates within purine metabolism; IMP biosynthesis via de novo pathway; IMP from 5-formamido-1-(5-phospho-D-ribosyl)imidazole-4-carboxamide: step 1/1. This chain is Bifunctional purine biosynthesis protein PurH, found in Escherichia coli O45:K1 (strain S88 / ExPEC).